A 631-amino-acid chain; its full sequence is Phosphomethylpyrimidine synthase (631 aa).

Substrate-binding positions include Asn-239, Met-268, Tyr-297, His-333, 353 to 355 (SRG), 394 to 397 (DGLR), and Glu-433. His-437 serves as a coordination point for Zn(2+). Tyr-460 is a substrate binding site. His-501 contacts Zn(2+). Residues Cys-581, Cys-584, and Cys-589 each contribute to the [4Fe-4S] cluster site.

Belongs to the ThiC family. Homodimer. It depends on [4Fe-4S] cluster as a cofactor.

The catalysed reaction is 5-amino-1-(5-phospho-beta-D-ribosyl)imidazole + S-adenosyl-L-methionine = 4-amino-2-methyl-5-(phosphooxymethyl)pyrimidine + CO + 5'-deoxyadenosine + formate + L-methionine + 3 H(+). The protein operates within cofactor biosynthesis; thiamine diphosphate biosynthesis. In terms of biological role, catalyzes the synthesis of the hydroxymethylpyrimidine phosphate (HMP-P) moiety of thiamine from aminoimidazole ribotide (AIR) in a radical S-adenosyl-L-methionine (SAM)-dependent reaction. The sequence is that of Phosphomethylpyrimidine synthase from Escherichia coli (strain SMS-3-5 / SECEC).